Consider the following 219-residue polypeptide: Ran-binding protein 1 homolog c (219 aa).

Residues 1–11 are compositionally biased toward basic and acidic residues; the sequence is MASTEPERENR. Disordered regions lie at residues 1–30 and 160–219; these read MAST…VAPI and QVGK…EAST. Positions 12–23 are enriched in acidic residues; that stretch reads EDETEVNEDEDT. Residues 26-161 form the RanBD1 domain; that stretch reads QVAPIVRLEE…FTEIAESQQV (136 aa). A compositionally biased stretch (basic and acidic residues) spans 185–219; the sequence is SEEKAKEAEEKEPAKEDKETKKEKVEEEKKTEAST.

The protein localises to the nucleus. The protein resides in the nuclear pore complex. The polypeptide is Ran-binding protein 1 homolog c (RANBP1C) (Arabidopsis thaliana (Mouse-ear cress)).